The following is a 454-amino-acid chain: MDRATVSLIVLAAGQGTRMNSDLPKVLHPLGAAPMLHHALRAGQSLEPERVVVVAGHGAEAVAKAARAFDESIEVVVQAEQLGTAHAVAQAAPLLADAPGEAVVLYGDTPFIRPETLERMLDLRSRHAVVVLGFEATDPGRYGRLVTRGEELDRIVEWKDATDEERTISLCNSGVICAEAGLLLALVSEVGNANAAGEYYLTDVVALARVRGLSAGVAICDEAETLGVNTRAQLAEAEAEFQKRARAAALEDGVTLTAPDTVFFALDTFLGRDAIVGPNVVFGPGVTVESGAEIRAFCHLEGCHISRGATVGPFARLRPGAELAEDVHVGNFVEIKNAVLDEGVKVGHLTYLGDAHVGEHTNIGAGTVTCNYDGVMKHRTEIGAHAFIGSDTMLVAPVTVGARAMTASGSVITENVPAEALALGRARQVTKPGMATRLMEMFRAAKAAKKKEAP.

The pyrophosphorylase stretch occupies residues 1-231 (MDRATVSLIV…EAETLGVNTR (231 aa)). Residues 11–14 (LAAG), Lys-25, Gln-78, 83–84 (GT), 106–108 (YGD), Gly-143, Glu-157, Asn-172, and Asn-229 contribute to the UDP-N-acetyl-alpha-D-glucosamine site. Asp-108 lines the Mg(2+) pocket. Asn-229 contributes to the Mg(2+) binding site. The segment at 232–252 (AQLAEAEAEFQKRARAAALED) is linker. Positions 253–454 (GVTLTAPDTV…AKAAKKKEAP (202 aa)) are N-acetyltransferase. Residues Arg-318 and Lys-336 each coordinate UDP-N-acetyl-alpha-D-glucosamine. The Proton acceptor role is filled by His-348. Residues Tyr-351 and Asn-362 each contribute to the UDP-N-acetyl-alpha-D-glucosamine site. Acetyl-CoA is bound by residues Ala-365, 371 to 372 (NY), Ser-390, Ser-408, and Arg-425.

The protein in the N-terminal section; belongs to the N-acetylglucosamine-1-phosphate uridyltransferase family. It in the C-terminal section; belongs to the transferase hexapeptide repeat family. Homotrimer. Requires Mg(2+) as cofactor.

Its subcellular location is the cytoplasm. It carries out the reaction alpha-D-glucosamine 1-phosphate + acetyl-CoA = N-acetyl-alpha-D-glucosamine 1-phosphate + CoA + H(+). The enzyme catalyses N-acetyl-alpha-D-glucosamine 1-phosphate + UTP + H(+) = UDP-N-acetyl-alpha-D-glucosamine + diphosphate. Its pathway is nucleotide-sugar biosynthesis; UDP-N-acetyl-alpha-D-glucosamine biosynthesis; N-acetyl-alpha-D-glucosamine 1-phosphate from alpha-D-glucosamine 6-phosphate (route II): step 2/2. It participates in nucleotide-sugar biosynthesis; UDP-N-acetyl-alpha-D-glucosamine biosynthesis; UDP-N-acetyl-alpha-D-glucosamine from N-acetyl-alpha-D-glucosamine 1-phosphate: step 1/1. The protein operates within bacterial outer membrane biogenesis; LPS lipid A biosynthesis. Catalyzes the last two sequential reactions in the de novo biosynthetic pathway for UDP-N-acetylglucosamine (UDP-GlcNAc). The C-terminal domain catalyzes the transfer of acetyl group from acetyl coenzyme A to glucosamine-1-phosphate (GlcN-1-P) to produce N-acetylglucosamine-1-phosphate (GlcNAc-1-P), which is converted into UDP-GlcNAc by the transfer of uridine 5-monophosphate (from uridine 5-triphosphate), a reaction catalyzed by the N-terminal domain. The chain is Bifunctional protein GlmU from Cereibacter sphaeroides (strain ATCC 17023 / DSM 158 / JCM 6121 / CCUG 31486 / LMG 2827 / NBRC 12203 / NCIMB 8253 / ATH 2.4.1.) (Rhodobacter sphaeroides).